The primary structure comprises 300 residues: uncharacterized protein (300 aa).

Residues 1–19 form the signal peptide; the sequence is MKLKLLLIPLLGSSLLLSA. Cys-20 carries N-palmitoyl cysteine lipidation. Cys-20 carries S-diacylglycerol cysteine lipidation.

The protein belongs to the MG439/MG440 family.

The protein resides in the cell membrane. This is an uncharacterized protein from Mycoplasma pneumoniae (strain ATCC 29342 / M129 / Subtype 1) (Mycoplasmoides pneumoniae).